The sequence spans 702 residues: Putative methyltransferase NSUN7 (702 aa).

Cys-424 functions as the Nucleophile in the catalytic mechanism. Disordered regions lie at residues 522 to 541, 567 to 593, and 675 to 702; these read KSSK…TKAA, ETVT…KHKL, and PTPS…RRWL. Over residues 523 to 534 the composition is skewed to basic residues; it reads SSKREKKKKKSK. The segment covering 567 to 587 has biased composition (polar residues); the sequence is ETVTKPSLPQKNTAQVGASSQ. Residues 681 to 691 show a composition bias toward basic and acidic residues; that stretch reads RKGEKPKDDTR.

This sequence belongs to the class I-like SAM-binding methyltransferase superfamily. RsmB/NOP family.

In terms of biological role, may have S-adenosyl-L-methionine-dependent methyl-transferase activity. This chain is Putative methyltransferase NSUN7 (NSUN7), found in Macaca fascicularis (Crab-eating macaque).